A 184-amino-acid chain; its full sequence is Large ribosomal subunit protein uL22 (184 aa).

Belongs to the universal ribosomal protein uL22 family. As to quaternary structure, part of the 50S ribosomal subunit.

This protein binds specifically to 23S rRNA. It makes multiple contacts with different domains of the 23S rRNA in the assembled 50S subunit and ribosome. Functionally, the globular domain of the protein is located near the polypeptide exit tunnel on the outside of the subunit, while an extended beta-hairpin is found that lines the wall of the exit tunnel in the center of the 70S ribosome. This is Large ribosomal subunit protein uL22 from Pyrobaculum calidifontis (strain DSM 21063 / JCM 11548 / VA1).